A 196-amino-acid polypeptide reads, in one-letter code: Large ribosomal subunit protein mL66 (196 aa).

The N-terminal 34 residues, 1–34 (MAALKALVSGCGRLLRGLLAGPAATSWSRLPARG), are a transit peptide targeting the mitochondrion.

It belongs to the bacterial ribosomal protein bS18 family. Mitochondrion-specific ribosomal protein mL66 subfamily. Component of the mitochondrial large ribosomal subunit (mt-LSU). Mature mammalian 55S mitochondrial ribosomes consist of a small (28S) and a large (39S) subunit. The 28S small subunit contains a 12S ribosomal RNA (12S mt-rRNA) and 30 different proteins. The 39S large subunit contains a 16S rRNA (16S mt-rRNA), a copy of mitochondrial valine transfer RNA (mt-tRNA(Val)), which plays an integral structural role, and 52 different proteins. mL66 forms a zinc-binding site with uL10m.

It is found in the mitochondrion. The sequence is that of Large ribosomal subunit protein mL66 (MRPS18A) from Homo sapiens (Human).